The sequence spans 627 residues: Chaperone protein DnaK (627 aa).

At threonine 197 the chain carries Phosphothreonine; by autocatalysis. Over residues methionine 596–glycine 615 the composition is skewed to low complexity. The interval methionine 596–lysine 627 is disordered. Acidic residues predominate over residues asparagine 617–lysine 627.

This sequence belongs to the heat shock protein 70 family.

In terms of biological role, acts as a chaperone. This is Chaperone protein DnaK from Flavobacterium johnsoniae (strain ATCC 17061 / DSM 2064 / JCM 8514 / BCRC 14874 / CCUG 350202 / NBRC 14942 / NCIMB 11054 / UW101) (Cytophaga johnsonae).